The primary structure comprises 533 residues: Berberine bridge enzyme-like 12 (533 aa).

An N-terminal signal peptide occupies residues 1–20 (MYLIFLLFFAASYSMSLSSA). Cysteine 32 and cysteine 95 are joined by a disulfide. N-linked (GlcNAc...) asparagine glycans are attached at residues asparagine 35, asparagine 70, asparagine 133, asparagine 296, asparagine 412, and asparagine 417. One can recognise an FAD-binding PCMH-type domain in the interval 73–249 (SMPKPSIIIV…LAFKVKLVTV (177 aa)). The segment at residues 110–174 (HDYDGLSYVS…EVHAFPAGVC (65 aa)) is a cross-link (6-(S-cysteinyl)-8alpha-(pros-histidyl)-FAD (His-Cys)).

Belongs to the oxygen-dependent FAD-linked oxidoreductase family. FAD is required as a cofactor. The FAD cofactor is bound via a bicovalent 6-S-cysteinyl, 8alpha-N1-histidyl FAD linkage.

Its subcellular location is the secreted. It localises to the cell wall. The protein is Berberine bridge enzyme-like 12 of Arabidopsis thaliana (Mouse-ear cress).